Consider the following 222-residue polypeptide: Probable GTP-binding protein EngB (222 aa).

Residues 22–197 (TSAEIAFVGR…ETVVAGWFAG (176 aa)) form the EngB-type G domain. Residues S37 and T59 each contribute to the Mg(2+) site. Positions 201-222 (RQADELTDGEPDDRTPDPDSAS) are disordered. Basic and acidic residues predominate over residues 212 to 222 (DDRTPDPDSAS).

It belongs to the TRAFAC class TrmE-Era-EngA-EngB-Septin-like GTPase superfamily. EngB GTPase family. It depends on Mg(2+) as a cofactor.

In terms of biological role, necessary for normal cell division and for the maintenance of normal septation. The sequence is that of Probable GTP-binding protein EngB from Laribacter hongkongensis (strain HLHK9).